The sequence spans 178 residues: Alkyl hydroperoxide reductase AhpD (178 aa).

Catalysis depends on Cys-131, which acts as the Proton donor. Residues Cys-131 and Cys-134 are joined by a disulfide bond. Cys-134 (cysteine sulfenic acid (-SOH) intermediate) is an active-site residue.

Belongs to the AhpD family.

The enzyme catalyses N(6)-[(R)-dihydrolipoyl]-L-lysyl-[lipoyl-carrier protein] + a hydroperoxide = N(6)-[(R)-lipoyl]-L-lysyl-[lipoyl-carrier protein] + an alcohol + H2O. Functionally, antioxidant protein with alkyl hydroperoxidase activity. Required for the reduction of the AhpC active site cysteine residues and for the regeneration of the AhpC enzyme activity. The polypeptide is Alkyl hydroperoxide reductase AhpD (Methylocella silvestris (strain DSM 15510 / CIP 108128 / LMG 27833 / NCIMB 13906 / BL2)).